The following is a 206-amino-acid chain: Ras-related protein Rab-18 (206 aa).

N-acetylmethionine is present on methionine 1. GTP is bound by residues serine 17, glycine 20, lysine 21, serine 22, serine 23, aspartate 34, proline 35, threonine 40, glycine 66, lysine 123, and aspartate 125. Serine 22 contacts Mg(2+). 2 short sequence motifs (switch) span residues 31-45 (DTFD…GVDF) and 63-80 (DTAG…YYRG). Residue threonine 40 coordinates Mg(2+). Serine 144 bears the Phosphoserine mark. Position 152 (alanine 152) interacts with GTP. Cysteine 199 is lipidated: S-palmitoyl cysteine. Cysteine methyl ester is present on cysteine 203. The S-geranylgeranyl cysteine moiety is linked to residue cysteine 203. Positions 204 to 206 (SVL) are cleaved as a propeptide — removed in mature form.

Belongs to the small GTPase superfamily. Rab family. As to quaternary structure, interacts (in GTP-bound form) with ZFYVE1. Interacts with ZW10 and this interaction is enhanced in the presence of ZFYVE1. Interacts with BSCL2. Mg(2+) serves as cofactor.

It is found in the endoplasmic reticulum membrane. The protein resides in the golgi apparatus. Its subcellular location is the cis-Golgi network membrane. It localises to the lipid droplet. The protein localises to the apical cell membrane. The catalysed reaction is GTP + H2O = GDP + phosphate + H(+). Regulated by guanine nucleotide exchange factors (GEFs) which promote the exchange of bound GDP for free GTP. Regulated by GTPase activating proteins (GAPs) which increase the GTP hydrolysis activity at the ER membrane. Inhibited by GDP dissociation inhibitors (GDIs) which prevent Rab-GDP dissociation. Functionally, the small GTPases Rab are key regulators of intracellular membrane trafficking, from the formation of transport vesicles to their fusion with membranes. Rabs cycle between an inactive GDP-bound form and an active GTP-bound form that is able to recruit to membranes different sets of downstream effectors directly responsible for vesicle formation, movement, tethering and fusion. RAB18 is required for the localization of ZFYVE1 to lipid droplets and for its function in mediating the formation of endoplasmic reticulum-lipid droplets (ER-LD) contacts. Also required for maintaining endoplasmic reticulum structure. Plays a role in apical endocytosis/recycling. Plays a key role in eye and brain development and neurodegeneration. This Rattus norvegicus (Rat) protein is Ras-related protein Rab-18.